The sequence spans 276 residues: Formamidopyrimidine-DNA glycosylase (276 aa).

P2 functions as the Schiff-base intermediate with DNA in the catalytic mechanism. E3 serves as the catalytic Proton donor. Catalysis depends on K60, which acts as the Proton donor; for beta-elimination activity. Residues H93 and R112 each contribute to the DNA site. The FPG-type zinc-finger motif lies at 240–274; sequence NVYGKKGEPCVTCGTILEKTVVGGRGTHYCPICQP. Residue R264 is the Proton donor; for delta-elimination activity of the active site.

The protein belongs to the FPG family. Monomer. Zn(2+) serves as cofactor.

The enzyme catalyses Hydrolysis of DNA containing ring-opened 7-methylguanine residues, releasing 2,6-diamino-4-hydroxy-5-(N-methyl)formamidopyrimidine.. It catalyses the reaction 2'-deoxyribonucleotide-(2'-deoxyribose 5'-phosphate)-2'-deoxyribonucleotide-DNA = a 3'-end 2'-deoxyribonucleotide-(2,3-dehydro-2,3-deoxyribose 5'-phosphate)-DNA + a 5'-end 5'-phospho-2'-deoxyribonucleoside-DNA + H(+). In terms of biological role, involved in base excision repair of DNA damaged by oxidation or by mutagenic agents. Acts as a DNA glycosylase that recognizes and removes damaged bases. Has a preference for oxidized purines, such as 7,8-dihydro-8-oxoguanine (8-oxoG). Has AP (apurinic/apyrimidinic) lyase activity and introduces nicks in the DNA strand. Cleaves the DNA backbone by beta-delta elimination to generate a single-strand break at the site of the removed base with both 3'- and 5'-phosphates. The protein is Formamidopyrimidine-DNA glycosylase of Bacillus cereus (strain ATCC 10987 / NRS 248).